Here is a 72-residue protein sequence, read N- to C-terminus: Translation initiation factor IF-1 (72 aa).

The region spanning 1-72 (MARDDVIEVD…DKGRITFRYK (72 aa)) is the S1-like domain.

It belongs to the IF-1 family. In terms of assembly, component of the 30S ribosomal translation pre-initiation complex which assembles on the 30S ribosome in the order IF-2 and IF-3, IF-1 and N-formylmethionyl-tRNA(fMet); mRNA recruitment can occur at any time during PIC assembly.

It localises to the cytoplasm. One of the essential components for the initiation of protein synthesis. Stabilizes the binding of IF-2 and IF-3 on the 30S subunit to which N-formylmethionyl-tRNA(fMet) subsequently binds. Helps modulate mRNA selection, yielding the 30S pre-initiation complex (PIC). Upon addition of the 50S ribosomal subunit IF-1, IF-2 and IF-3 are released leaving the mature 70S translation initiation complex. The protein is Translation initiation factor IF-1 of Helicobacter pylori (strain HPAG1).